Consider the following 554-residue polypeptide: Hydroxylamine reductase (554 aa).

[2Fe-2S] cluster is bound by residues C3, C6, C18, and C25. Positions 252, 276, 320, 408, 436, 461, 495, and 497 each coordinate hybrid [4Fe-2O-2S] cluster. At C408 the chain carries Cysteine persulfide.

The protein belongs to the HCP family. Requires [2Fe-2S] cluster as cofactor. The cofactor is hybrid [4Fe-2O-2S] cluster.

It is found in the cytoplasm. It carries out the reaction A + NH4(+) + H2O = hydroxylamine + AH2 + H(+). Its function is as follows. Catalyzes the reduction of hydroxylamine to form NH(3) and H(2)O. The chain is Hydroxylamine reductase from Shewanella pealeana (strain ATCC 700345 / ANG-SQ1).